The sequence spans 259 residues: Proteasome subunit alpha (259 aa).

Residues 233-243 (PAAPAAASESA) show a composition bias toward low complexity. The tract at residues 233-259 (PAAPAAASESAPEPKPDTETKPADPQD) is disordered. A compositionally biased stretch (basic and acidic residues) spans 244-259 (PEPKPDTETKPADPQD).

This sequence belongs to the peptidase T1A family. In terms of assembly, the 20S proteasome core is composed of 14 alpha and 14 beta subunits that assemble into four stacked heptameric rings, resulting in a barrel-shaped structure. The two inner rings, each composed of seven catalytic beta subunits, are sandwiched by two outer rings, each composed of seven alpha subunits. The catalytic chamber with the active sites is on the inside of the barrel. Has a gated structure, the ends of the cylinder being occluded by the N-termini of the alpha-subunits. Is capped by the proteasome-associated ATPase, ARC.

Its subcellular location is the cytoplasm. Its pathway is protein degradation; proteasomal Pup-dependent pathway. Its activity is regulated as follows. The formation of the proteasomal ATPase ARC-20S proteasome complex, likely via the docking of the C-termini of ARC into the intersubunit pockets in the alpha-rings, may trigger opening of the gate for substrate entry. Interconversion between the open-gate and close-gate conformations leads to a dynamic regulation of the 20S proteasome proteolysis activity. In terms of biological role, component of the proteasome core, a large protease complex with broad specificity involved in protein degradation. The protein is Proteasome subunit alpha of Rhodococcus opacus (strain B4).